A 142-amino-acid polypeptide reads, in one-letter code: uncharacterized protein (142 aa).

The N-terminal stretch at 1-26 (MITEFIKSFLLFFFLPFFLSMPMIFA) is a signal peptide.

This is an uncharacterized protein from Schizosaccharomyces pombe (strain 972 / ATCC 24843) (Fission yeast).